A 340-amino-acid polypeptide reads, in one-letter code: Probable glucan endo-1,3-beta-glucosidase BG1 (340 aa).

Residues 1–25 (MDLRFLASLTLLLGLFFVNTNPTGG) form the signal peptide. Glu-120 (proton donor) is an active-site residue. Glu-262 serves as the catalytic Nucleophile.

It belongs to the glycosyl hydrolase 17 family.

The protein resides in the secreted. It catalyses the reaction Hydrolysis of (1-&gt;3)-beta-D-glucosidic linkages in (1-&gt;3)-beta-D-glucans.. Its function is as follows. May play a role in plant defense against pathogens. The sequence is that of Probable glucan endo-1,3-beta-glucosidase BG1 from Arabidopsis thaliana (Mouse-ear cress).